A 338-amino-acid polypeptide reads, in one-letter code: MDELPILPTTVIGSYPRPKWLREAIRLHKAGKISDEDLQEAFDDAVVTVLHDHEIAGVDVPTDGEMRRDEMVEFFAERLAGFKFYGPVRVWGTNYYRKPSVVSKVEYIKPMLVDEFLFAKSVSYTENLKITITGPYTIAEWSYNEYYKSKKDLAFDLAKVINSEMKKLVEAGAKIIQVDEPAIHTHKNEVEWAIEAVNESIKGINVKVVMHVCYGEYSYLEPYLDKLNVDQINLALKNYNYEPVKLFKKWDREIGVGVIDVHNKRIETPEEVANDLKMLLDYFKPEMIWVNPDCGLKLLPRKIAFQKLLNMVKGTKIVREELKNKGYNSTSLKPLVNR.

Residues His-211, Cys-213, and Cys-294 each coordinate Zn(2+).

It belongs to the archaeal MetE family. It depends on Zn(2+) as a cofactor.

The protein operates within amino-acid biosynthesis; L-methionine biosynthesis via de novo pathway. Functionally, catalyzes the transfer of a methyl group to L-homocysteine resulting in methionine formation. The physiological methyl donor is unknown. In Sulfurisphaera tokodaii (strain DSM 16993 / JCM 10545 / NBRC 100140 / 7) (Sulfolobus tokodaii), this protein is Methionine synthase.